Here is a 152-residue protein sequence, read N- to C-terminus: VQ motif-containing protein 8, chloroplastic (152 aa).

The tract at residues 1-42 is disordered; it reads MIPTRCNEINGSRPSSLKLAGESHTIKKTSSCKSKPRPHGRA. The N-terminal 58 residues, 1–58, are a transit peptide targeting the chloroplast; the sequence is MIPTRCNEINGSRPSSLKLAGESHTIKKTSSCKSKPRPHGRASPVIIYAHSPKVIHTR. The VQ motif lies at 62–71; sequence FMALVQRLTG. The segment at 80–108 is disordered; that stretch reads TSESSSSVVTEEVNVGDDNTAAPFSQDRT. The span at 81-92 shows a compositional bias: low complexity; that stretch reads SESSSSVVTEEV.

The protein localises to the plastid. It localises to the chloroplast. Its function is as follows. May be involved in chloroplast development. In Arabidopsis thaliana (Mouse-ear cress), this protein is VQ motif-containing protein 8, chloroplastic.